Here is a 368-residue protein sequence, read N- to C-terminus: tRNA/tmRNA (uracil-C(5))-methyltransferase (368 aa).

Residues Gln-190, Tyr-218, Asn-223, Glu-239, and Asp-301 each contribute to the S-adenosyl-L-methionine site. The active-site Nucleophile is the Cys-326. Glu-360 (proton acceptor) is an active-site residue.

Belongs to the class I-like SAM-binding methyltransferase superfamily. RNA M5U methyltransferase family. TrmA subfamily.

It catalyses the reaction uridine(54) in tRNA + S-adenosyl-L-methionine = 5-methyluridine(54) in tRNA + S-adenosyl-L-homocysteine + H(+). It carries out the reaction uridine(341) in tmRNA + S-adenosyl-L-methionine = 5-methyluridine(341) in tmRNA + S-adenosyl-L-homocysteine + H(+). Its function is as follows. Dual-specificity methyltransferase that catalyzes the formation of 5-methyluridine at position 54 (m5U54) in all tRNAs, and that of position 341 (m5U341) in tmRNA (transfer-mRNA). The sequence is that of tRNA/tmRNA (uracil-C(5))-methyltransferase from Aliivibrio salmonicida (strain LFI1238) (Vibrio salmonicida (strain LFI1238)).